A 102-amino-acid polypeptide reads, in one-letter code: Large ribosomal subunit protein bL21 (102 aa).

The protein belongs to the bacterial ribosomal protein bL21 family. Part of the 50S ribosomal subunit. Contacts protein L20.

This protein binds to 23S rRNA in the presence of protein L20. The sequence is that of Large ribosomal subunit protein bL21 from Nitratidesulfovibrio vulgaris (strain ATCC 29579 / DSM 644 / CCUG 34227 / NCIMB 8303 / VKM B-1760 / Hildenborough) (Desulfovibrio vulgaris).